The following is a 355-amino-acid chain: Ribosomal RNA large subunit methyltransferase M (355 aa).

Residues S183, 216–219, D235, D255, and D271 contribute to the S-adenosyl-L-methionine site; that span reads SPGG. The active-site Proton acceptor is K300.

It belongs to the class I-like SAM-binding methyltransferase superfamily. RNA methyltransferase RlmE family. RlmM subfamily. As to quaternary structure, monomer.

The protein localises to the cytoplasm. The enzyme catalyses cytidine(2498) in 23S rRNA + S-adenosyl-L-methionine = 2'-O-methylcytidine(2498) in 23S rRNA + S-adenosyl-L-homocysteine + H(+). Its function is as follows. Catalyzes the 2'-O-methylation at nucleotide C2498 in 23S rRNA. The sequence is that of Ribosomal RNA large subunit methyltransferase M from Pseudomonas putida (strain W619).